Consider the following 175-residue polypeptide: uncharacterized protein (175 aa).

The first 23 residues, 1 to 23 (MILVLLLILIAFLYIYFPSSLNQ), serve as a signal peptide directing secretion.

This is an uncharacterized protein from Invertebrate iridescent virus 6 (IIV-6).